A 245-amino-acid polypeptide reads, in one-letter code: tRNA pseudouridine synthase A (245 aa).

D52 acts as the Nucleophile in catalysis. Y111 contacts substrate.

Belongs to the tRNA pseudouridine synthase TruA family. In terms of assembly, homodimer.

It catalyses the reaction uridine(38/39/40) in tRNA = pseudouridine(38/39/40) in tRNA. In terms of biological role, formation of pseudouridine at positions 38, 39 and 40 in the anticodon stem and loop of transfer RNAs. The sequence is that of tRNA pseudouridine synthase A from Rhodopseudomonas palustris (strain BisB18).